Reading from the N-terminus, the 730-residue chain is Guanylate cyclase soluble subunit alpha-2 (730 aa).

The interval 1–53 (MSRRKISSESFSSLGSDYLETSPEEEGECPLSKLCWNGSRSPPGPPGSRAAAM) is disordered. A Guanylate cyclase domain is found at 519–646 (TMLFSDIVGF…NNVTLASKFE (128 aa)).

This sequence belongs to the adenylyl cyclase class-4/guanylyl cyclase family. In terms of assembly, heterodimer of an alpha and a beta chain.

The protein resides in the cytoplasm. It catalyses the reaction GTP = 3',5'-cyclic GMP + diphosphate. Its activity is regulated as follows. Activated by nitric oxide in the presence of magnesium or manganese ions. Functionally, has guanylyl cyclase on binding to the beta-1 subunit. This Rattus norvegicus (Rat) protein is Guanylate cyclase soluble subunit alpha-2 (Gucy1a2).